The chain runs to 147 residues: Hemoglobin subunit beta (147 aa).

One can recognise a Globin domain in the interval 3–147 (EWTDKERSII…VVSALGKQYH (145 aa)). Residues His64 and His93 each contribute to the heme b site.

Belongs to the globin family. As to quaternary structure, heterotetramer of two alpha chains and two beta chains. In terms of tissue distribution, red blood cells.

Functionally, involved in oxygen transport from gills to the various peripheral tissues. The protein is Hemoglobin subunit beta (hbb) of Trematomus hansoni (Striped rockcod).